A 242-amino-acid polypeptide reads, in one-letter code: Venom nerve growth factor 3 (242 aa).

The first 18 residues, 1–18 (MSMLCYTLIIAFLIGIWA), serve as a signal peptide directing secretion. The propeptide occupies 19–125 (APKSEDNVPL…ALNRNIRSKR (107 aa)). Residues 48–66 (LKTSRNTDQRHPAPKKAED) show a composition bias toward basic and acidic residues. The tract at residues 48 to 69 (LKTSRNTDQRHPAPKKAEDQEL) is disordered. Intrachain disulfides connect Cys139–Cys203, Cys181–Cys231, and Cys191–Cys233. N-linked (GlcNAc...) asparagine glycosylation is present at Asn147.

The protein belongs to the NGF-beta family. As to quaternary structure, homodimer; non-covalently linked. Expressed by the venom gland.

It localises to the secreted. Its function is as follows. Nerve growth factor is important for the development and maintenance of the sympathetic and sensory nervous systems. It stimulates division and differentiation of sympathetic and embryonic sensory neurons as well as basal forebrain cholinergic neurons in the brain. Its relevance in the snake venom is not clear. However, it has been shown to inhibit metalloproteinase-dependent proteolysis of platelet glycoprotein Ib alpha, suggesting a metalloproteinase inhibition to prevent metalloprotease autodigestion and/or protection against prey proteases. Binds a lipid between the two protein chains in the homodimer. The lipid-bound form promotes histamine relase from mouse mast cells, contrary to the lipid-free form. This Demansia vestigiata (Lesser black whip snake) protein is Venom nerve growth factor 3.